Consider the following 73-residue polypeptide: Excelsatoxin A (73 aa).

The signal sequence occupies residues 1–20; that stretch reads MRFALVAAITIALLVAGSVA. A propeptide spanning residues 21–37 is cleaved from the precursor; sequence DESSEDIDNIVIKTPLD. Disulfide bonds link Cys-41–Cys-58, Cys-46–Cys-60, and Cys-54–Cys-69.

Belongs to the gympietide family. In terms of tissue distribution, expressed in trichomes, that are stiff epidermal hairs located on the surface of petioles and leaves. Not expressed in other aerial parts.

Its subcellular location is the secreted. Its function is as follows. Neurotoxin certainly responsible for the defensive, persistent, and painful stings of the giant stinging tree. Inhibits inactivation of Nav1.7/SCN9A sodium channel in sensory neurons by directly interacting with TMEM233, a newly described Nav-interacting protein. Has virtually no effect on Nav1.7/SCN9A function in heterologous expression systems and in neurons that do not express TMEM233. Also weakly but significantly affects Nav1.8/SCN10A. Coexpression of TMEM233 with Nav also confers ExTxA sensitivity to Nav1.1-Nav1.6. On the Nav1.7/SCN9A channel, causes a significant hyperpolarizing shift in the voltage dependence of activation. Its effects on Nav currents are irreversible, with no apparent reduction in activity even after repeated wash steps over 30 minutes. Does not show activity on Nav1.9/SCN11A. Does not show insecticidal activities. In vivo, induces nocifensive behavior in mice (licking or biting and shaking or lifting of the affected paw) lasting for approximately 1 hour. The polypeptide is Excelsatoxin A (Dendrocnide excelsa (Giant stinging tree)).